A 103-amino-acid chain; its full sequence is Large ribosomal subunit protein bL21 (103 aa).

It belongs to the bacterial ribosomal protein bL21 family. Part of the 50S ribosomal subunit. Contacts protein L20.

Its function is as follows. This protein binds to 23S rRNA in the presence of protein L20. This is Large ribosomal subunit protein bL21 from Mycolicibacterium smegmatis (strain ATCC 700084 / mc(2)155) (Mycobacterium smegmatis).